The following is a 513-amino-acid chain: Histidine ammonia-lyase (513 aa).

A cross-link (5-imidazolinone (Ala-Gly)) is located at residues A146 to G148. S147 carries the 2,3-didehydroalanine (Ser) modification.

It belongs to the PAL/histidase family. Contains an active site 4-methylidene-imidazol-5-one (MIO), which is formed autocatalytically by cyclization and dehydration of residues Ala-Ser-Gly.

It localises to the cytoplasm. It catalyses the reaction L-histidine = trans-urocanate + NH4(+). Its pathway is amino-acid degradation; L-histidine degradation into L-glutamate; N-formimidoyl-L-glutamate from L-histidine: step 1/3. This Caulobacter vibrioides (strain NA1000 / CB15N) (Caulobacter crescentus) protein is Histidine ammonia-lyase.